A 339-amino-acid chain; its full sequence is Serine/threonine-protein kinase SAPK2 (339 aa).

Positions 4 to 260 constitute a Protein kinase domain; it reads YEVIKDIGSG…IPEIKNHPWF (257 aa). Residues 10 to 18 and lysine 33 contribute to the ATP site; that span reads IGSGNFGVA. The active-site Proton acceptor is the aspartate 123. Residues 253-339 are C-terminal; sequence EIKNHPWFLK…EDSGDFVCAL (87 aa).

It belongs to the protein kinase superfamily. Ser/Thr protein kinase family. As to quaternary structure, interacts with BZIP46. Interacts with ABI5 and PP2C30. Interacts with PP2C51. Phosphorylated. In terms of tissue distribution, expressed in leaf blades, leaf sheaths and roots. Expressed in shoots and roots of young seedlings.

The protein resides in the cytoplasm. It localises to the nucleus. The enzyme catalyses L-seryl-[protein] + ATP = O-phospho-L-seryl-[protein] + ADP + H(+). It catalyses the reaction L-threonyl-[protein] + ATP = O-phospho-L-threonyl-[protein] + ADP + H(+). With respect to regulation, activated by phosphorylation in response to hyperosmotic stress within 5 minutes. May play a role in signal transduction of hyperosmotic response. Can phosphorylate BZIP46 in vitro. Together with ABI5, PP2C30 and PYL5, is part of an abscisic acid (ABA) signaling unit that modulates seed germination and early seedling growth. The chain is Serine/threonine-protein kinase SAPK2 (SAPK2) from Oryza sativa subsp. japonica (Rice).